The sequence spans 163 residues: uncharacterized protein (163 aa).

Positions 1–10 are enriched in basic and acidic residues; sequence MGVPRAREGR. Residues 1-163 are disordered; that stretch reads MGVPRAREGR…WSFTPLRWGS (163 aa).

This is an uncharacterized protein from Homo sapiens (Human).